The primary structure comprises 195 residues: Pyridoxal 5'-phosphate synthase subunit PdxT (195 aa).

An L-glutamine-binding site is contributed by 49-51; sequence GES. Catalysis depends on C81, which acts as the Nucleophile. L-glutamine contacts are provided by residues R113 and 141-142; that span reads IR. Residues H177 and E179 each act as charge relay system in the active site.

The protein belongs to the glutaminase PdxT/SNO family. In the presence of PdxS, forms a dodecamer of heterodimers. Only shows activity in the heterodimer.

The enzyme catalyses aldehydo-D-ribose 5-phosphate + D-glyceraldehyde 3-phosphate + L-glutamine = pyridoxal 5'-phosphate + L-glutamate + phosphate + 3 H2O + H(+). It catalyses the reaction L-glutamine + H2O = L-glutamate + NH4(+). The protein operates within cofactor biosynthesis; pyridoxal 5'-phosphate biosynthesis. Its function is as follows. Catalyzes the hydrolysis of glutamine to glutamate and ammonia as part of the biosynthesis of pyridoxal 5'-phosphate. The resulting ammonia molecule is channeled to the active site of PdxS. The sequence is that of Pyridoxal 5'-phosphate synthase subunit PdxT from Mycolicibacterium vanbaalenii (strain DSM 7251 / JCM 13017 / BCRC 16820 / KCTC 9966 / NRRL B-24157 / PYR-1) (Mycobacterium vanbaalenii).